The primary structure comprises 138 residues: ATP synthase epsilon chain (138 aa).

This sequence belongs to the ATPase epsilon chain family. F-type ATPases have 2 components, CF(1) - the catalytic core - and CF(0) - the membrane proton channel. CF(1) has five subunits: alpha(3), beta(3), gamma(1), delta(1), epsilon(1). CF(0) has three main subunits: a, b and c.

It is found in the cell inner membrane. Its function is as follows. Produces ATP from ADP in the presence of a proton gradient across the membrane. This chain is ATP synthase epsilon chain, found in Trichlorobacter lovleyi (strain ATCC BAA-1151 / DSM 17278 / SZ) (Geobacter lovleyi).